The sequence spans 242 residues: Type III pantothenate kinase (242 aa).

7-14 provides a ligand contact to ATP; it reads DLGNSRFK. Substrate contacts are provided by residues Tyr91 and 98–101; that span reads GVDR. Asp100 functions as the Proton acceptor in the catalytic mechanism. Thr121 contributes to the ATP binding site. Thr171 serves as a coordination point for substrate.

It belongs to the type III pantothenate kinase family. Homodimer. NH4(+) serves as cofactor. It depends on K(+) as a cofactor.

Its subcellular location is the cytoplasm. The enzyme catalyses (R)-pantothenate + ATP = (R)-4'-phosphopantothenate + ADP + H(+). Its pathway is cofactor biosynthesis; coenzyme A biosynthesis; CoA from (R)-pantothenate: step 1/5. Catalyzes the phosphorylation of pantothenate (Pan), the first step in CoA biosynthesis. The chain is Type III pantothenate kinase from Xylella fastidiosa (strain 9a5c).